The primary structure comprises 1040 residues: MQVLPPSSTGGPSRLFIMRPVATTLLMVAILLAGIIGYRALPVSALPEVDYPTIQVVTLYPGASPDVMTSAVTAPLERQFGQMSGLKQMSSQSSGGASVITLQFQLTLPLDVAEQEVQAAINAATNLLPSDLPNPPVYSKVNPADPPIMTLAVTSTAMPMTQVEDMVETRVAQKISQISGVGLVTLSGGQRPAVRVKLNAQAIAALGLTSETVRTAITGANVNSAKGSLDGPSRAVTLSANDQMQSAEEYRQLIIAYQNGAPIRLGDVATVEQGAENSWLGAWANKEQAIVMNVQRQPGANIISTADSIRQMLPQLTESLPKSVKVTVLSDRTTNIRASVDDTQFELMMAIALVVMIIYLFLRNIPATIIPGVAVPLSLIGTFAVMVFLDFSINNLTLMALTIATGFVVDDAIVVIENISRYIEKGEKPLAAALKGAGEIGFTIISLTFSLIAVLIPLLFMGDIVGRLFREFAITLAVAILISAVVSLTLTPMMCARMLSQESLRKQNRFSRASEKMFDRIIAAYGRGLAKVLNHPWLTLSVALSTLLLSVLLWVFIPKGFFPVQDNGIIQGTLQAPQSSSFTNMAQRQRQVADVILQDPAVQSLTSFVGVDGTNPSLNSARLQINLKPLDERDDRVQKVIARLQTAVDKVPGVDLFLQPTQDLTIDTQVSRTQYQFTLQATSLDALSTWVPQLMEKLQQLPQLSDVSSDWQDQGLVAYVNVDRDSASRLGISMADVDNALYNAFGQRLISTIYTQANQYRVVLEHNTEITPGLAALDTIRLTSSDGGVVPLSSIAKVEQRFAPLSINHLDQFPVTTISFNVPDNYSLGDAVQEIMDTEKTLNLPVDITTQFQGSTLAFQSALGSTVWLIVAAVVAMYIVLGILYESFIHPITILSTLPTAGVGALLALMIAGSELDVIAIIGIILLIGIVKKNAIMMIDFALAAEREQGMSPRDAIYQACLLRFRPILMTTLAALLGALPLMLSTGVGAELRRPLGIGMVGGLIVSQVLTLFTTPVIYLLFDRLALWTKSRFARHEEEA.

12 consecutive transmembrane segments (helical) span residues 16-36 (FIMR…AGII), 347-367 (LMMA…NIPA), 369-389 (IIPG…MVFL), 396-416 (LTLM…IVVI), 440-460 (IGFT…PLLF), 472-492 (FAIT…TLTP), 537-557 (WLTL…WVFI), 863-883 (LGST…VLGI), 888-908 (FIHP…ALLA), 911-931 (IAGS…IGIV), 968-988 (ILMT…STGV), and 998-1018 (IGMV…TPVI).

This sequence belongs to the resistance-nodulation-cell division (RND) (TC 2.A.6) family. MdtB subfamily. Part of a tripartite efflux system composed of MdtA, MdtB and MdtC. MdtB forms a heteromultimer with MdtC.

The protein localises to the cell inner membrane. The sequence is that of Multidrug resistance protein MdtB from Shigella sonnei (strain Ss046).